The sequence spans 1066 residues: Pumilio homolog 2 (1066 aa).

The interaction with SNAPIN stretch occupies residues 1 to 260; it reads MNHDFQALAL…TVGLFDYNSQ (260 aa). Phosphoserine is present on residues Ser67, Ser70, Ser82, and Ser102. Disordered stretches follow at residues 106 to 203, 368 to 408, and 490 to 551; these read KLDS…GPLP, TANQ…AESL, and TGST…SASL. Positions 119–133 are enriched in basic and acidic residues; the sequence is RDAETDGPEKGDQKG. Ser136, Ser177, and Ser181 each carry phosphoserine. Thr183 carries the phosphothreonine modification. Over residues 368–383 the composition is skewed to low complexity; the sequence is TANQQAASQAQPGQQQ. The span at 394–406 shows a compositional bias: polar residues; it reads ITPSQGQQGQQAE. Residue Thr395 is modified to Phosphothreonine. Residues 503-514 are compositionally biased toward low complexity; the sequence is QPPQQQQQQQQP. Over residues 515-525 the composition is skewed to polar residues; sequence STNLQSNSFYG. A compositionally biased stretch (low complexity) spans 526 to 540; that stretch reads SSSLTNSSQSSSLFS. Residues Ser587 and Ser592 each carry the phosphoserine modification. The interval 620–650 is disordered; the sequence is SPIGMPLPSQTPGHSLTPPPSLSSHGSSSSL. Over residues 630–650 the composition is skewed to low complexity; the sequence is TPGHSLTPPPSLSSHGSSSSL. At Arg674 the chain carries Omega-N-methylarginine. Phosphoserine is present on residues Ser684 and Ser700. One can recognise a PUM-HD domain in the interval 706 to 1048; that stretch reads GRSRLLEDFR…HILAKLEKYY (343 aa). 8 Pumilio repeats span residues 726–761, 762–797, 798–835, 836–871, 872–907, 908–943, 944–979, and 980–1022; these read DLIG…IVFN, EILQ…ALAT, RIRG…EMVK, ELDG…FIID, AFKG…PILE, ELHQ…KIVS, EIRG…LLID, and EVCC…IIMH. An adenine-nucleotide binding in RNA target region spans residues 741–745; the sequence is SRFIQ. A uracil-nucleotide binding in RNA target region spans residues 777-781; the sequence is NYVIQ. The tract at residues 813 to 817 is adenine-nucleotide binding in RNA target; it reads CRVIQ. The segment at 851-855 is non-specific-nucleotide binding in RNA target; sequence NHVVQ. Residues 887-891 are adenine-nucleotide binding in RNA target; the sequence is CRVIQ. Residues 923-927 are uracil-nucleotide binding in RNA target; it reads NYVIQ. A guanine-nucleotide binding in RNA target region spans residues 959-963; it reads SNVVE. A uracil-nucleotide binding in RNA target region spans residues 1002-1006; that stretch reads NYVVQ.

In terms of assembly, homodimer; homodimerizes in vitro. Interacts with DAZ1, DAZL and NANOS1 via its pumilio repeats. Interacts with NANOS3. Interacts with SNAPIN. Recruits the CCR4-POP2-NOT deadenylase leading to translational inhibition and mRNA degradation. Interacts with DDX20. In case of viral infection, interacts with DHX58. As to expression, widely expressed. Expressed in embryonic stem cells, heart, kidney, lung, skin, intestine, spleen and thymus. Expressed at intermediate level in brain and liver. Weakly or not expressed in muscles and stomach. Expressed at various stages of myeloid and lymphoid cell development. In the testis expressed in the spermatogoni, spermatocytes, spermatids and Sertoli cells.

The protein localises to the cytoplasm. It is found in the cytoplasmic granule. The protein resides in the perinuclear region. Functionally, sequence-specific RNA-binding protein that acts as a post-transcriptional repressor by binding the 3'-UTR of mRNA targets. Binds to an RNA consensus sequence, the Pumilio Response Element (PRE), 5'-UGUANAUA-3', that is related to the Nanos Response Element (NRE). Mediates post-transcriptional repression of transcripts via different mechanisms: acts via direct recruitment of the CCR4-POP2-NOT deadenylase leading to translational inhibition and mRNA degradation. Also mediates deadenylation-independent repression by promoting accessibility of miRNAs. Acts as a post-transcriptional repressor of E2F3 mRNAs by binding to its 3'-UTR and facilitating miRNA regulation. Plays a role in cytoplasmic sensing of viral infection. Represses a program of genes necessary to maintain genomic stability such as key mitotic, DNA repair and DNA replication factors. Its ability to repress those target mRNAs is regulated by the lncRNA NORAD (non-coding RNA activated by DNA damage) which, due to its high abundance and multitude of PUMILIO binding sites, is able to sequester a significant fraction of PUM1 and PUM2 in the cytoplasm. May regulate DCUN1D3 mRNA levels. May support proliferation and self-renewal of stem cells. Binds specifically to miRNA MIR199A precursor, with PUM1, regulates miRNA MIR199A expression at a postranscriptional level. The sequence is that of Pumilio homolog 2 (Pum2) from Mus musculus (Mouse).